We begin with the raw amino-acid sequence, 108 residues long: Zinc metalloproteinase/disintegrin (108 aa).

Positions 1–19 (NEYQTYLTDRNPQCILNEP) constitute a Peptidase M12B domain. Residues 20–35 (LRTDTVSTPVSGNELL) constitute a propeptide that is removed on maturation. The Disintegrin domain occupies 27 to 108 (TPVSGNELLE…ADCPRNGFYG (82 aa)). 6 disulfides stabilise this stretch: Cys-41–Cys-56, Cys-43–Cys-51, Cys-50–Cys-73, Cys-64–Cys-70, Cys-69–Cys-94, and Cys-82–Cys-101. The Cell attachment site; atypical (KGD) signature appears at 86-88 (KGD).

It belongs to the venom metalloproteinase (M12B) family. P-II subfamily. P-IIa sub-subfamily. As to quaternary structure, monomeric (disintegrin). Zn(2+) serves as cofactor. In terms of tissue distribution, expressed by the venom gland.

It is found in the secreted. Its function is as follows. Impairs hemostasis in the envenomed animal. Inhibits platelet aggregation induced by ADP, thrombin, platelet-activating factor and collagen. Acts by inhibiting fibrinogen interaction with platelet receptors GPIIb/GPIIIa (ITGA2B/ITGB3). In Gloydius brevicauda (Korean slamosa snake), this protein is Zinc metalloproteinase/disintegrin.